The sequence spans 61 residues: 2S seed storage albumin protein (61 aa).

The protein belongs to the 2S seed storage albumins family. In terms of assembly, the mature protein consists of a small and a large chain linked by 2 disulfide bonds.

In terms of biological role, this is a 2S seed storage protein. Inhibits cell-free protein synthesis. This chain is 2S seed storage albumin protein, found in Cucurbita moschata (Winter crookneck squash).